Reading from the N-terminus, the 509-residue chain is MTQQNAQSTSEPTISENDLIAQRHAKLKQIQDVAKETGKSPWPNTFKREHYAADLQEQFKDQSKEQIESAEHVYVKVAGRVMLNRGSFMVIQDMTGRIQLYVDRKGLPKDTLETIKGLDLGDIIAAEGYIGRSGKGDLYVHLEGFELLTKSLRPLPDKFHGLNDTEVKYRKRYLDLIVNEETRKTFEIRAKVVAGIRAFLTNERFMEVETPMMHVIPGGASARPFETHHNALDMPLFLRIAPELYLKRLVVGGFERVFEINRNFRNEGVSTRHNPEFTMIEFYQAYADYKDLMALTENMLEKLAIDILGTTDVPYQGEVFSFKGPFKKISMFDAILENNPQFTPENVGDREFLAKFVREELKEEVKPGFGLGKLQTIVFEETVETKLRQPTFITEYPAETSPLARRNDDNPHITDRFEFFIGGRELANGFSELNDPIDQAERFQAQVAEKDAGDDEAMHYDAEFVEALEYGLPPTAGEGIGIDRLVMLFADAPSIRDVILFPHMRRKEG.

Mg(2+) contacts are provided by glutamate 418 and glutamate 425.

Belongs to the class-II aminoacyl-tRNA synthetase family. In terms of assembly, homodimer. Mg(2+) serves as cofactor.

It is found in the cytoplasm. The enzyme catalyses tRNA(Lys) + L-lysine + ATP = L-lysyl-tRNA(Lys) + AMP + diphosphate. The sequence is that of Lysine--tRNA ligase from Acinetobacter baumannii (strain ATCC 17978 / DSM 105126 / CIP 53.77 / LMG 1025 / NCDC KC755 / 5377).